A 233-amino-acid chain; its full sequence is Glycerol-3-phosphate acyltransferase 5 (233 aa).

The next 5 helical transmembrane spans lie at 3-23, 69-89, 116-136, 143-163, and 168-188; these read LVFI…MAYL, MILL…VGLF, LVMA…FGLF, VFLG…FFGI, and TISW…LMAP.

The protein belongs to the PlsY family. As to quaternary structure, probably interacts with PlsX.

It localises to the cell membrane. The catalysed reaction is an acyl phosphate + sn-glycerol 3-phosphate = a 1-acyl-sn-glycero-3-phosphate + phosphate. It functions in the pathway lipid metabolism; phospholipid metabolism. Its function is as follows. Catalyzes the transfer of an acyl group from acyl-phosphate (acyl-PO(4)) to glycerol-3-phosphate (G3P) to form lysophosphatidic acid (LPA). This enzyme utilizes acyl-phosphate as fatty acyl donor, but not acyl-CoA or acyl-ACP. The chain is Glycerol-3-phosphate acyltransferase 5 from Dehalococcoides mccartyi (strain ATCC BAA-2266 / KCTC 15142 / 195) (Dehalococcoides ethenogenes (strain 195)).